The chain runs to 452 residues: Probable phosphoglucosamine mutase (452 aa).

Serine 96 serves as the catalytic Phosphoserine intermediate. Residues serine 96, aspartate 233, aspartate 235, and aspartate 237 each contribute to the Mg(2+) site. Residue serine 96 is modified to Phosphoserine.

The protein belongs to the phosphohexose mutase family. The cofactor is Mg(2+). Post-translationally, activated by phosphorylation.

The catalysed reaction is alpha-D-glucosamine 1-phosphate = D-glucosamine 6-phosphate. Functionally, catalyzes the conversion of glucosamine-6-phosphate to glucosamine-1-phosphate. This is Probable phosphoglucosamine mutase from Pyrococcus furiosus (strain ATCC 43587 / DSM 3638 / JCM 8422 / Vc1).